Here is a 318-residue protein sequence, read N- to C-terminus: Aspartate carbamoyltransferase catalytic subunit (318 aa).

2 residues coordinate carbamoyl phosphate: Arg-59 and Thr-60. Lys-87 is a binding site for L-aspartate. Residues Arg-109, His-137, and Gln-140 each coordinate carbamoyl phosphate. The L-aspartate site is built by Arg-170 and Arg-224. Carbamoyl phosphate is bound by residues Gly-265 and Pro-266.

The protein belongs to the aspartate/ornithine carbamoyltransferase superfamily. ATCase family. In terms of assembly, heterododecamer (2C3:3R2) of six catalytic PyrB chains organized as two trimers (C3), and six regulatory PyrI chains organized as three dimers (R2).

The catalysed reaction is carbamoyl phosphate + L-aspartate = N-carbamoyl-L-aspartate + phosphate + H(+). It participates in pyrimidine metabolism; UMP biosynthesis via de novo pathway; (S)-dihydroorotate from bicarbonate: step 2/3. In terms of biological role, catalyzes the condensation of carbamoyl phosphate and aspartate to form carbamoyl aspartate and inorganic phosphate, the committed step in the de novo pyrimidine nucleotide biosynthesis pathway. In Rhizobium rhizogenes (strain K84 / ATCC BAA-868) (Agrobacterium radiobacter), this protein is Aspartate carbamoyltransferase catalytic subunit.